A 247-amino-acid chain; its full sequence is Small ribosomal subunit protein uS2 (247 aa).

This sequence belongs to the universal ribosomal protein uS2 family.

The chain is Small ribosomal subunit protein uS2 from Pseudomonas savastanoi pv. phaseolicola (strain 1448A / Race 6) (Pseudomonas syringae pv. phaseolicola (strain 1448A / Race 6)).